The following is a 455-amino-acid chain: Bifunctional protein GlmU (455 aa).

The pyrophosphorylase stretch occupies residues 1–226 (MGLSVVILAA…EFEILGVNDR (226 aa)). Residues 8 to 11 (LAAG), Lys22, Gln73, 78 to 79 (GT), 99 to 101 (YGD), Gly136, Glu151, Asn166, and Asn224 each bind UDP-N-acetyl-alpha-D-glucosamine. Asp101 serves as a coordination point for Mg(2+). Asn224 provides a ligand contact to Mg(2+). Residues 227–247 (TQLASLERVWQRNVAEKIMAK) are linker. The interval 248-455 (GVSIADPNRF…WQRSVKKTDK (208 aa)) is N-acetyltransferase. UDP-N-acetyl-alpha-D-glucosamine is bound by residues Arg330 and Lys348. Catalysis depends on His360, which acts as the Proton acceptor. Positions 363 and 374 each coordinate UDP-N-acetyl-alpha-D-glucosamine. Acetyl-CoA-binding positions include Ala377, 383 to 384 (NY), Ser402, Ala420, and Arg437.

The protein in the N-terminal section; belongs to the N-acetylglucosamine-1-phosphate uridyltransferase family. In the C-terminal section; belongs to the transferase hexapeptide repeat family. Homotrimer. Requires Mg(2+) as cofactor.

The protein localises to the cytoplasm. The catalysed reaction is alpha-D-glucosamine 1-phosphate + acetyl-CoA = N-acetyl-alpha-D-glucosamine 1-phosphate + CoA + H(+). It catalyses the reaction N-acetyl-alpha-D-glucosamine 1-phosphate + UTP + H(+) = UDP-N-acetyl-alpha-D-glucosamine + diphosphate. Its pathway is nucleotide-sugar biosynthesis; UDP-N-acetyl-alpha-D-glucosamine biosynthesis; N-acetyl-alpha-D-glucosamine 1-phosphate from alpha-D-glucosamine 6-phosphate (route II): step 2/2. It participates in nucleotide-sugar biosynthesis; UDP-N-acetyl-alpha-D-glucosamine biosynthesis; UDP-N-acetyl-alpha-D-glucosamine from N-acetyl-alpha-D-glucosamine 1-phosphate: step 1/1. It functions in the pathway bacterial outer membrane biogenesis; LPS lipid A biosynthesis. Its function is as follows. Catalyzes the last two sequential reactions in the de novo biosynthetic pathway for UDP-N-acetylglucosamine (UDP-GlcNAc). The C-terminal domain catalyzes the transfer of acetyl group from acetyl coenzyme A to glucosamine-1-phosphate (GlcN-1-P) to produce N-acetylglucosamine-1-phosphate (GlcNAc-1-P), which is converted into UDP-GlcNAc by the transfer of uridine 5-monophosphate (from uridine 5-triphosphate), a reaction catalyzed by the N-terminal domain. The chain is Bifunctional protein GlmU from Francisella tularensis subsp. tularensis (strain FSC 198).